The following is an 865-amino-acid chain: ABC transporter ATP-binding/permease protein Rv1747 (865 aa).

Residues 29–78 (VVVGRDLRADVRVAHPLISRAHLLLRFDQGRWVAIDNGSLNGLYLNNRRV) form the FHA 1 domain. Residues 104 to 205 (GRHRGSAGRP…PAGARGGTEA (102 aa)) form a disordered region. Residues 135 to 156 (PQTGTLGSGQLQQLPPATTRIP) are compositionally biased toward low complexity. A Phosphothreonine modification is found at Thr-152. Pro residues predominate over residues 157 to 166 (AAPPSGPQPR). Thr-210 is subject to Phosphothreonine. Positions 230 to 279 (VRIGRANDNDIVIPEVLASRHHATLVPTPGGTEIRDNRSINGTFVNGARV) constitute an FHA 2 domain. Residues 319–552 (LDVRGVTWTI…VMGTTNWADI (234 aa)) enclose the ABC transporter domain. 352-359 (GPSGAGKS) serves as a coordination point for ATP. Positions 596–810 (RQFSTIARRQ…TPARWGFAAS (215 aa)) constitute an ABC transmembrane type-2 domain. Transmembrane regions (helical) follow at residues 614-634 (GYFV…MSVP), 652-672 (PGQI…ALTI), 700-720 (VCVY…IVLV), 740-760 (FVDV…LSAI), 767-787 (IMPL…GMIP), and 836-856 (SAWW…VGFV).

This sequence in the central section; belongs to the ABC transporter superfamily. It in the C-terminal section; belongs to the ABC-2 integral membrane protein family. In terms of assembly, homodimer. Interacts with PknF. Phosphorylated by PknF. Can probably be phosphorylated in vivo by other kinases when PknF is missing.

Its subcellular location is the cell membrane. Its activity is regulated as follows. Function is positively regulated by phosphorylation. Its function is as follows. Involved in the translocation of an unknown substrate across the membrane. Transmembrane domains (TMD) form a pore in the membrane and the ATP-binding domain (NBD) is responsible for energy generation. Required for virulence. In Mycobacterium tuberculosis (strain ATCC 25618 / H37Rv), this protein is ABC transporter ATP-binding/permease protein Rv1747.